Here is a 275-residue protein sequence, read N- to C-terminus: Phosphatidylglycerol--prolipoprotein diacylglyceryl transferase (275 aa).

Helical transmembrane passes span 22–42, 61–81, 96–116, 125–145, 177–197, 204–224, and 238–258; these read LSVRWYGLMYLFGFAFAMWLA, LLFYGFLGVILGGRVGYVLFY, IWTGGMSFHGGLIGVITAMIW, FFTVADFVAPLIPFGLGVGRI, SQLYQFALEGVVLFIILNLFW, GAISGLFLFCYGLFRFLVEFV, and ISMGQILSMPMIVAGALMVWA. Residue R144 participates in a 1,2-diacyl-sn-glycero-3-phospho-(1'-sn-glycerol) binding.

The protein belongs to the Lgt family.

Its subcellular location is the cell inner membrane. It catalyses the reaction L-cysteinyl-[prolipoprotein] + a 1,2-diacyl-sn-glycero-3-phospho-(1'-sn-glycerol) = an S-1,2-diacyl-sn-glyceryl-L-cysteinyl-[prolipoprotein] + sn-glycerol 1-phosphate + H(+). The protein operates within protein modification; lipoprotein biosynthesis (diacylglyceryl transfer). Functionally, catalyzes the transfer of the diacylglyceryl group from phosphatidylglycerol to the sulfhydryl group of the N-terminal cysteine of a prolipoprotein, the first step in the formation of mature lipoproteins. This Aeromonas salmonicida (strain A449) protein is Phosphatidylglycerol--prolipoprotein diacylglyceryl transferase.